A 488-amino-acid chain; its full sequence is Glutamyl-tRNA(Gln) amidotransferase subunit A (488 aa).

Active-site charge relay system residues include Lys-77 and Ser-152. Residue Ser-176 is the Acyl-ester intermediate of the active site.

Belongs to the amidase family. GatA subfamily. Heterotrimer of A, B and C subunits.

It catalyses the reaction L-glutamyl-tRNA(Gln) + L-glutamine + ATP + H2O = L-glutaminyl-tRNA(Gln) + L-glutamate + ADP + phosphate + H(+). Allows the formation of correctly charged Gln-tRNA(Gln) through the transamidation of misacylated Glu-tRNA(Gln) in organisms which lack glutaminyl-tRNA synthetase. The reaction takes place in the presence of glutamine and ATP through an activated gamma-phospho-Glu-tRNA(Gln). This chain is Glutamyl-tRNA(Gln) amidotransferase subunit A, found in Streptococcus pyogenes serotype M6 (strain ATCC BAA-946 / MGAS10394).